The chain runs to 526 residues: Transcription factor kayak (526 aa).

Disordered regions lie at residues 71–165 (PPLA…GTGG) and 178–221 (RNTN…NKQA). Low complexity-rich tracts occupy residues 78–87 (NNNNNNNNNG) and 133–153 (ISDT…HMMG). Gly residues predominate over residues 154–165 (NSGGGNGGGTGG). Positions 178-187 (RNTNTSNSAT) are enriched in polar residues. In terms of domain architecture, bZIP spans 208-271 (EEKRRIRRER…NQLEYFLQAH (64 aa)). The segment at 210-229 (KRRIRRERNKQAAARCRKRR) is basic motif. The leucine-zipper stretch occupies residues 236 to 264 (LTEEVELLEKRGENLKKEMELLNETKNQL). A compositionally biased stretch (low complexity) spans 301–322 (GSCGSGSSHHNNNSNSNDSSSG). Disordered regions lie at residues 301–345 (GSCG…DLKP) and 504–526 (TSQN…LVSL). The span at 330-340 (TLNSTGRSNSP) shows a compositional bias: polar residues. At Ser339 the chain carries Phosphoserine.

It belongs to the bZIP family. Fos subfamily. As to quaternary structure, homodimer. Heterodimer with Jra. The kay-Jra heterodimer binds more stably to the AP-1 site than either of the two proteins alone.

Its subcellular location is the nucleus. Its function is as follows. Developmentally regulated transcription factor AP-1 binds and recognizes the enhancer DNA sequence: 5'-TGA[CG]TCA-3'. May play a role in the function or determination of a particular subset of cells in the developing embryo. It is able to carry out its function either independently of or in conjunction with Jra. The polypeptide is Transcription factor kayak (Drosophila persimilis (Fruit fly)).